Consider the following 140-residue polypeptide: MAAKIYHLDVVSAEKQMFSGLVEKIQVTGSEGELGIFPGHAPLLTAIKPGMVRIVKEHGNEEYIYLSGGVLEVQPSTVTVLADTAIRGEDLDEARAMESKRKAEEHINNSHGDIDYAQASAELSKALAKLRVIELTKKAM.

This sequence belongs to the ATPase epsilon chain family. F-type ATPases have 2 components, CF(1) - the catalytic core - and CF(0) - the membrane proton channel. CF(1) has five subunits: alpha(3), beta(3), gamma(1), delta(1), epsilon(1). CF(0) has three main subunits: a, b and c.

The protein localises to the cell inner membrane. Produces ATP from ADP in the presence of a proton gradient across the membrane. The polypeptide is ATP synthase epsilon chain (Sodalis glossinidius (strain morsitans)).